A 237-amino-acid polypeptide reads, in one-letter code: UPF0280 protein Mpal_1292 (237 aa).

It belongs to the UPF0280 family.

The chain is UPF0280 protein Mpal_1292 from Methanosphaerula palustris (strain ATCC BAA-1556 / DSM 19958 / E1-9c).